The chain runs to 129 residues: UPF0102 protein Cag_1992 (129 aa).

Belongs to the UPF0102 family.

The sequence is that of UPF0102 protein Cag_1992 from Chlorobium chlorochromatii (strain CaD3).